We begin with the raw amino-acid sequence, 524 residues long: Lysine--tRNA ligase (524 aa).

Mg(2+) contacts are provided by glutamate 431 and glutamate 438.

Belongs to the class-II aminoacyl-tRNA synthetase family. As to quaternary structure, homodimer. Mg(2+) is required as a cofactor.

Its subcellular location is the cytoplasm. The enzyme catalyses tRNA(Lys) + L-lysine + ATP = L-lysyl-tRNA(Lys) + AMP + diphosphate. This is Lysine--tRNA ligase (lysS) from Chlamydia muridarum (strain MoPn / Nigg).